A 402-amino-acid polypeptide reads, in one-letter code: MDTKAFKRSLQHSENYNRKGFGHQAEVATQLQSEYQSNLIQEIRDRNYILQRGDVTIRLAQAFGFCWGVERAVAMAYETRQHFPTEHIWITNEIIHNPSVNQRMQEMEVEFIPIEGKNKDFSVVGTGDVVILPAFGASVQEMQILHDKGCKIVDTTCPWVSKVWNTVEKHKKIDYTSIIHGKYKHEETVATSSFAGKYLIVLNLQEAQYVADYIINGGNREEFLTKFAKACSAGFDPDRDLERVGIANQTTMLKDETEQIGKLFERTMLQKYSPIELNQHFQSFNTICDATQERQDAMLELVEHNLNLMVVIGGFNSSNTTQLQQIAFERRIPSYHIDTVERIKSGDSIEHRQLNGQLITTENWLPDGEIVVGITSGASTPDKVVEDVIEKIFAVKATAALV.

Cysteine 66 is a binding site for [4Fe-4S] cluster. A (2E)-4-hydroxy-3-methylbut-2-enyl diphosphate-binding site is contributed by histidine 96. A dimethylallyl diphosphate-binding site is contributed by histidine 96. Histidine 96 provides a ligand contact to isopentenyl diphosphate. Residue cysteine 157 coordinates [4Fe-4S] cluster. Histidine 185 contributes to the (2E)-4-hydroxy-3-methylbut-2-enyl diphosphate binding site. Histidine 185 contributes to the dimethylallyl diphosphate binding site. Residue histidine 185 coordinates isopentenyl diphosphate. Residue glutamate 187 is the Proton donor of the active site. Threonine 250 contacts (2E)-4-hydroxy-3-methylbut-2-enyl diphosphate. Position 288 (cysteine 288) interacts with [4Fe-4S] cluster. (2E)-4-hydroxy-3-methylbut-2-enyl diphosphate is bound by residues serine 317, serine 318, asparagine 319, and serine 379. Positions 317, 318, 319, and 379 each coordinate dimethylallyl diphosphate. Isopentenyl diphosphate contacts are provided by serine 317, serine 318, asparagine 319, and serine 379.

The protein belongs to the IspH family. The cofactor is [4Fe-4S] cluster.

It carries out the reaction isopentenyl diphosphate + 2 oxidized [2Fe-2S]-[ferredoxin] + H2O = (2E)-4-hydroxy-3-methylbut-2-enyl diphosphate + 2 reduced [2Fe-2S]-[ferredoxin] + 2 H(+). The enzyme catalyses dimethylallyl diphosphate + 2 oxidized [2Fe-2S]-[ferredoxin] + H2O = (2E)-4-hydroxy-3-methylbut-2-enyl diphosphate + 2 reduced [2Fe-2S]-[ferredoxin] + 2 H(+). Its pathway is isoprenoid biosynthesis; dimethylallyl diphosphate biosynthesis; dimethylallyl diphosphate from (2E)-4-hydroxy-3-methylbutenyl diphosphate: step 1/1. The protein operates within isoprenoid biosynthesis; isopentenyl diphosphate biosynthesis via DXP pathway; isopentenyl diphosphate from 1-deoxy-D-xylulose 5-phosphate: step 6/6. Functionally, catalyzes the conversion of 1-hydroxy-2-methyl-2-(E)-butenyl 4-diphosphate (HMBPP) into a mixture of isopentenyl diphosphate (IPP) and dimethylallyl diphosphate (DMAPP). Acts in the terminal step of the DOXP/MEP pathway for isoprenoid precursor biosynthesis. This Nostoc punctiforme (strain ATCC 29133 / PCC 73102) protein is 4-hydroxy-3-methylbut-2-enyl diphosphate reductase.